Here is a 523-residue protein sequence, read N- to C-terminus: GMP synthase [glutamine-hydrolyzing] (523 aa).

One can recognise a Glutamine amidotransferase type-1 domain in the interval 8-205; that stretch reads KILILDFGSQ…VVNICGCATN (198 aa). The active-site Nucleophile is C85. Residues H179 and E181 contribute to the active site. The 193-residue stretch at 206 to 398 folds into the GMPS ATP-PPase domain; that stretch reads WTPENIIEDA…LGLPAEMLNR (193 aa). Residue 233-239 participates in ATP binding; it reads SGGVDSS.

As to quaternary structure, homodimer.

The enzyme catalyses XMP + L-glutamine + ATP + H2O = GMP + L-glutamate + AMP + diphosphate + 2 H(+). It participates in purine metabolism; GMP biosynthesis; GMP from XMP (L-Gln route): step 1/1. Its function is as follows. Catalyzes the synthesis of GMP from XMP. The protein is GMP synthase [glutamine-hydrolyzing] of Actinobacillus succinogenes (strain ATCC 55618 / DSM 22257 / CCUG 43843 / 130Z).